A 450-amino-acid polypeptide reads, in one-letter code: MSSHGAPIPMTSSACGPLTGEARVPGDKSISHRSLILGALSVGETRISGLLEGQDVLDTAKAMRAFGATVTDHGGGEWSVHGVGVGGFAEPDGVIDCGNSGTGVRLIMGAMATSPISATFTGDASLNGRPMARVTDPLALFGAQSYGRQGGRLPMTVVGAAEPVPVTYTVPVPSAQVKSAVLLAGLNAPGQTVVIEAEATRDHTERMLAGFGAEISVEDADEGRVITLTGQPELKSQKIDVPRDPSSAAFPVCAALIVPGSDVLVPGIGLNPTRAGLFTTLREMGADLTYENERVEGGEPVADLRARFSPDLTGIEVPPARAASMIDEYPVLSVVASFARGDTVMRGVKELRVKESDRIDAMASGLRANGVAVEDGPDWWVVTGRGHGNVAGGATCASFLDHRIAMSFLVMGMATQKPVTVDDAGPIATSFPIFEPLMAQLGARIQRDNG.

Positions 1 to 23 (MSSHGAPIPMTSSACGPLTGEAR) are disordered. Positions 28, 29, and 33 each coordinate 3-phosphoshikimate. Lysine 28 is a binding site for phosphoenolpyruvate. Glycine 101 and arginine 129 together coordinate phosphoenolpyruvate. 3-phosphoshikimate-binding residues include serine 174, glutamine 176, aspartate 327, and lysine 354. Glutamine 176 provides a ligand contact to phosphoenolpyruvate. Aspartate 327 functions as the Proton acceptor in the catalytic mechanism. Phosphoenolpyruvate-binding residues include arginine 358 and arginine 403.

This sequence belongs to the EPSP synthase family. In terms of assembly, monomer.

It localises to the cytoplasm. The enzyme catalyses 3-phosphoshikimate + phosphoenolpyruvate = 5-O-(1-carboxyvinyl)-3-phosphoshikimate + phosphate. It participates in metabolic intermediate biosynthesis; chorismate biosynthesis; chorismate from D-erythrose 4-phosphate and phosphoenolpyruvate: step 6/7. Functionally, catalyzes the transfer of the enolpyruvyl moiety of phosphoenolpyruvate (PEP) to the 5-hydroxyl of shikimate-3-phosphate (S3P) to produce enolpyruvyl shikimate-3-phosphate and inorganic phosphate. This Roseobacter denitrificans (strain ATCC 33942 / OCh 114) (Erythrobacter sp. (strain OCh 114)) protein is 3-phosphoshikimate 1-carboxyvinyltransferase.